The primary structure comprises 77 residues: UPF0346 protein LMOf2365_1885 (77 aa).

This sequence belongs to the UPF0346 family.

This Listeria monocytogenes serotype 4b (strain F2365) protein is UPF0346 protein LMOf2365_1885.